A 373-amino-acid chain; its full sequence is Glutamate 5-kinase (373 aa).

Residue lysine 12 coordinates ATP. Substrate contacts are provided by serine 52, aspartate 139, and asparagine 154. ATP is bound at residue 216–222 (TGGMVTK). The 79-residue stretch at 281 to 359 (RGNICIDDGA…DEINTVLAGN (79 aa)) folds into the PUA domain.

This sequence belongs to the glutamate 5-kinase family.

The protein localises to the cytoplasm. It catalyses the reaction L-glutamate + ATP = L-glutamyl 5-phosphate + ADP. The protein operates within amino-acid biosynthesis; L-proline biosynthesis; L-glutamate 5-semialdehyde from L-glutamate: step 1/2. Its function is as follows. Catalyzes the transfer of a phosphate group to glutamate to form L-glutamate 5-phosphate. This is Glutamate 5-kinase from Dehalococcoides mccartyi (strain ATCC BAA-2266 / KCTC 15142 / 195) (Dehalococcoides ethenogenes (strain 195)).